Reading from the N-terminus, the 421-residue chain is Adenosylhomocysteinase (421 aa).

Substrate-binding residues include Asp128 and Glu153. Residue Thr154–Thr156 participates in NAD(+) binding. Substrate-binding residues include Lys183 and Asp187. NAD(+)-binding positions include Asn188, Gly217–Gly222, Glu240, Ala296–His298, and Asn343.

The protein belongs to the adenosylhomocysteinase family. NAD(+) serves as cofactor.

The protein resides in the cytoplasm. It catalyses the reaction S-adenosyl-L-homocysteine + H2O = L-homocysteine + adenosine. It participates in amino-acid biosynthesis; L-homocysteine biosynthesis; L-homocysteine from S-adenosyl-L-homocysteine: step 1/1. May play a key role in the regulation of the intracellular concentration of adenosylhomocysteine. This chain is Adenosylhomocysteinase, found in Thermococcus kodakarensis (strain ATCC BAA-918 / JCM 12380 / KOD1) (Pyrococcus kodakaraensis (strain KOD1)).